A 465-amino-acid chain; its full sequence is Cysteine--tRNA ligase (465 aa).

Cysteine 27 contributes to the Zn(2+) binding site. The short motif at 29-39 (PTVYDDAHLGH) is the 'HIGH' region element. Cysteine 207, histidine 237, and glutamate 241 together coordinate Zn(2+). The 'KMSKS' region signature appears at 269–273 (KMSKS). Lysine 272 contributes to the ATP binding site.

The protein belongs to the class-I aminoacyl-tRNA synthetase family. Monomer. Requires Zn(2+) as cofactor.

It is found in the cytoplasm. It catalyses the reaction tRNA(Cys) + L-cysteine + ATP = L-cysteinyl-tRNA(Cys) + AMP + diphosphate. This chain is Cysteine--tRNA ligase, found in Helicobacter acinonychis (strain Sheeba).